A 338-amino-acid polypeptide reads, in one-letter code: Ribosomal RNA small subunit methyltransferase C (338 aa).

Belongs to the methyltransferase superfamily. RsmC family. Monomer.

Its subcellular location is the cytoplasm. The catalysed reaction is guanosine(1207) in 16S rRNA + S-adenosyl-L-methionine = N(2)-methylguanosine(1207) in 16S rRNA + S-adenosyl-L-homocysteine + H(+). Functionally, specifically methylates the guanine in position 1207 of 16S rRNA in the 30S particle. The polypeptide is Ribosomal RNA small subunit methyltransferase C (Photorhabdus laumondii subsp. laumondii (strain DSM 15139 / CIP 105565 / TT01) (Photorhabdus luminescens subsp. laumondii)).